Reading from the N-terminus, the 117-residue chain is Thioredoxin (117 aa).

The region spanning 2–116 (AISLTEEDFV…FENIIKDFFG (115 aa)) is the Thioredoxin domain. Cysteines 40 and 43 form a disulfide.

Belongs to the thioredoxin family.

Its function is as follows. Participates in various redox reactions through the reversible oxidation of its active center dithiol to a disulfide and catalyzes dithiol-disulfide exchange reactions. The chain is Thioredoxin (trxA) from Borreliella burgdorferi (strain ATCC 35210 / DSM 4680 / CIP 102532 / B31) (Borrelia burgdorferi).